A 798-amino-acid polypeptide reads, in one-letter code: Copalyl diphosphate synthase 1, chloroplastic (798 aa).

The N-terminal 72 residues, 1–72 (MASLSTMHLI…SKVAGINRVA (72 aa)), are a transit peptide targeting the chloroplast. Residue K251 coordinates substrate. Positions 383 and 385 each coordinate Mg(2+). A DXDD motif motif is present at residues 383–386 (DIDD). K469 lines the substrate pocket.

The protein belongs to the terpene synthase family. Tpsc subfamily. The cofactor is Mg(2+). As to expression, highly expressed in roots, and, at low levels, in stems and leaves.

Its subcellular location is the plastid. The protein resides in the chloroplast. It carries out the reaction (2E,6E,10E)-geranylgeranyl diphosphate = (+)-copalyl diphosphate. The protein operates within secondary metabolite biosynthesis; terpenoid biosynthesis. In terms of biological role, involved in the biosynthesis of ent-kaurene diterpenoids natural products such as oridonin, miltiradiene, eriocalyxin B and nezukol, known to exhibit antitumor, anti-inflammatory and antibacterial activities. Catalyzes the conversion of (2E,6E,10E)-geranylgeranyl diphosphate (GGPP) to (+)-copalyl diphosphate ((+)-CPP). The polypeptide is Copalyl diphosphate synthase 1, chloroplastic (Isodon rubescens (Rabdosia rubescens)).